The primary structure comprises 561 residues: Serine palmitoyltransferase 2 (561 aa).

The helical transmembrane segment at 57–77 (PYYISLLTYLNYLILIILGHV) threads the bilayer. The residue at position 366 (Lys366) is an N6-(pyridoxal phosphate)lysine. A helical membrane pass occupies residues 443 to 463 (LGFIVYGVADSPVIPLLLYCP).

The protein belongs to the class-II pyridoxal-phosphate-dependent aminotransferase family. As to quaternary structure, LCB1 and LCB2 encode essential subunits of the enzyme and form a heterodimer. Component of the SPOTS complex, at least composed of LCB1/2 (LCB1 and/or LCB2), ORM1/2 (ORM1 and/or ORM2), SAC1 and TSC3. Interacts with LCB1 and TSC3. It depends on pyridoxal 5'-phosphate as a cofactor.

The protein localises to the cytoplasm. It is found in the endoplasmic reticulum. It localises to the membrane. It carries out the reaction L-serine + hexadecanoyl-CoA + H(+) = 3-oxosphinganine + CO2 + CoA. The protein operates within lipid metabolism; sphingolipid metabolism. Catalytic subunit of serine palmitoyltransferase (SPT), which catalyzes the committed step in the synthesis of sphingolipids, the condensation of serine with palmitoyl CoA to form the long chain base 3-ketosphinganine. This chain is Serine palmitoyltransferase 2 (LCB2), found in Saccharomyces cerevisiae (strain ATCC 204508 / S288c) (Baker's yeast).